Here is a 61-residue protein sequence, read N- to C-terminus: Metallothionein-2 (61 aa).

Residue methionine 1 is modified to N-acetylmethionine. The interval 1–29 (MDPNCSCAAGDSCTCAGSCKCKECKCTSC) is beta. The a divalent metal cation site is built by cysteine 5, cysteine 7, cysteine 13, cysteine 15, cysteine 19, cysteine 21, cysteine 24, cysteine 26, cysteine 29, cysteine 33, cysteine 34, cysteine 36, cysteine 37, cysteine 41, cysteine 44, cysteine 48, cysteine 50, and cysteine 57. Residues 30 to 61 (KKSCCSCCPVGCAKCAQGCICKGASDKCSCCA) are alpha. Serine 58 bears the Phosphoserine mark. A divalent metal cation-binding residues include cysteine 59 and cysteine 60.

The protein belongs to the metallothionein superfamily. Type 1 family. Interacts with EOLA1.

In terms of biological role, metallothioneins have a high content of cysteine residues that bind various heavy metals; these proteins are transcriptionally regulated by both heavy metals and glucocorticoids. The sequence is that of Metallothionein-2 from Homo sapiens (Human).